A 526-amino-acid polypeptide reads, in one-letter code: Adenylyl cyclase-associated protein (526 aa).

The adenyl cyclase-binding stretch occupies residues 1–168; that stretch reads MPDSKYTMQG…RQSKYFAYLS (168 aa). Disordered regions lie at residues 43–72, 255–304, and 326–371; these read EASK…PEVE, QSTK…DANK, and KVDK…RPPR. A compositionally biased stretch (polar residues) spans 45-64; sequence SKNNKPSDSGADANTTNEPS. The short motif at 169–369 is the SH3-binding element; it reads ALSEGAPLFS…KPSTLKTKRP (201 aa). Over residues 262 to 274 the composition is skewed to low complexity; the sequence is ATSSPSPASATAA. Positions 275–285 are enriched in pro residues; the sequence is PAPPPPPPAPP. Residues 290-302 show a composition bias toward polar residues; sequence EISNDTPATSSDA. The span at 326–338 shows a compositional bias: basic and acidic residues; the sequence is KVDKSQQTHKNPE. Residues 342–352 are compositionally biased toward low complexity; it reads SSTVSSTGSKS. The segment at 354-361 is interaction with SH3 domain of ABP1; that stretch reads PPPRPKKP. The segment covering 357 to 370 has biased composition (basic residues); the sequence is RPKKPSTLKTKRPP. In terms of domain architecture, C-CAP/cofactor C-like spans 369–504; that stretch reads PPRKELVGNK…EDDDYVEFPI (136 aa). A dimerization and actin-binding region spans residues 370–526; sequence PRKELVGNKW…FKSAVFEHAG (157 aa). A Phosphoserine modification is found at serine 454.

The protein belongs to the CAP family. As to quaternary structure, homodimer.

It localises to the cytoplasm. Its subcellular location is the cytoskeleton. It is found in the actin patch. In terms of biological role, the N-terminal domain binds to adenylyl cyclase, thereby enabling adenylyl cyclase to be activated by upstream regulatory signals, such as Ras. The C-terminal domain is required for normal cellular morphology and growth control. This is Adenylyl cyclase-associated protein (SRV2) from Saccharomyces cerevisiae (strain ATCC 204508 / S288c) (Baker's yeast).